A 204-amino-acid chain; its full sequence is Lysozyme G (204 aa).

The N-terminal stretch at 1-19 (MHLMLVLLGLAALLGTSQS) is a signal peptide. 2 cysteine pairs are disulfide-bonded: Cys23/Cys79 and Cys37/Cys48. Residues Glu92 and Asp105 contribute to the active site.

This sequence belongs to the glycosyl hydrolase 23 family.

It localises to the secreted. It carries out the reaction Hydrolysis of (1-&gt;4)-beta-linkages between N-acetylmuramic acid and N-acetyl-D-glucosamine residues in a peptidoglycan and between N-acetyl-D-glucosamine residues in chitodextrins.. Its function is as follows. Has bacteriolytic activity against M.luteus. In Dromaius novaehollandiae (Emu), this protein is Lysozyme G.